The following is a 97-amino-acid chain: YcgL domain-containing protein PputGB1_4120 (97 aa).

Positions 3–87 constitute a YcgL domain; that stretch reads RICSIYKSPR…AEDEYIEHLP (85 aa).

This is YcgL domain-containing protein PputGB1_4120 from Pseudomonas putida (strain GB-1).